The following is a 690-amino-acid chain: Elongation factor G (690 aa).

One can recognise a tr-type G domain in the interval 8 to 283; sequence SKCRNIGIMA…AVVDFLPAPN (276 aa). Residues 17–24, 81–85, and 135–138 contribute to the GTP site; these read AHIDAGKT, DTPGH, and NKMD.

It belongs to the TRAFAC class translation factor GTPase superfamily. Classic translation factor GTPase family. EF-G/EF-2 subfamily.

It is found in the cytoplasm. In terms of biological role, catalyzes the GTP-dependent ribosomal translocation step during translation elongation. During this step, the ribosome changes from the pre-translocational (PRE) to the post-translocational (POST) state as the newly formed A-site-bound peptidyl-tRNA and P-site-bound deacylated tRNA move to the P and E sites, respectively. Catalyzes the coordinated movement of the two tRNA molecules, the mRNA and conformational changes in the ribosome. The sequence is that of Elongation factor G from Ehrlichia chaffeensis (strain ATCC CRL-10679 / Arkansas).